Here is a 157-residue protein sequence, read N- to C-terminus: 2-C-methyl-D-erythritol 2,4-cyclodiphosphate synthase (157 aa).

A divalent metal cation-binding residues include Asp8 and His10. 4-CDP-2-C-methyl-D-erythritol 2-phosphate contacts are provided by residues 8-10 and 34-35; these read DIH and HS. Residue His42 participates in a divalent metal cation binding. Residues 56 to 58, 61 to 65, 132 to 135, and Arg142 each bind 4-CDP-2-C-methyl-D-erythritol 2-phosphate; these read DIG, FPDTD, and TTNE.

It belongs to the IspF family. In terms of assembly, homotrimer. It depends on a divalent metal cation as a cofactor.

The enzyme catalyses 4-CDP-2-C-methyl-D-erythritol 2-phosphate = 2-C-methyl-D-erythritol 2,4-cyclic diphosphate + CMP. It functions in the pathway isoprenoid biosynthesis; isopentenyl diphosphate biosynthesis via DXP pathway; isopentenyl diphosphate from 1-deoxy-D-xylulose 5-phosphate: step 4/6. Its function is as follows. Involved in the biosynthesis of isopentenyl diphosphate (IPP) and dimethylallyl diphosphate (DMAPP), two major building blocks of isoprenoid compounds. Catalyzes the conversion of 4-diphosphocytidyl-2-C-methyl-D-erythritol 2-phosphate (CDP-ME2P) to 2-C-methyl-D-erythritol 2,4-cyclodiphosphate (ME-CPP) with a corresponding release of cytidine 5-monophosphate (CMP). The chain is 2-C-methyl-D-erythritol 2,4-cyclodiphosphate synthase from Chloroherpeton thalassium (strain ATCC 35110 / GB-78).